Consider the following 239-residue polypeptide: Sensory rhodopsin-1 (239 aa).

Residues Met1–Ala3 are Extracellular-facing. A helical membrane pass occupies residues Val4–Leu25. Residues Tyr26 to His34 lie on the Cytoplasmic side of the membrane. The chain crosses the membrane as a helical span at residues Gln35–Ala56. Residues Tyr57–Val70 are Extracellular-facing. A helical membrane pass occupies residues Gly71–Ala92. At Gly93–Ser95 the chain is on the cytoplasmic side. A helical membrane pass occupies residues Arg96–Val118. At Thr119 to Thr122 the chain is on the extracellular side. Residues Leu123–Val150 form a helical membrane-spanning segment. Topologically, residues Pro151–Val153 are cytoplasmic. A helical membrane pass occupies residues Pro154 to Gly181. Residues Pro182 to Thr189 lie on the Extracellular side of the membrane. The chain crosses the membrane as a helical span at residues Ala190–Ser222. Lys205 carries the N6-(retinylidene)lysine modification. At Glu223–Asp239 the chain is on the cytoplasmic side.

This sequence belongs to the archaeal/bacterial/fungal opsin family. In terms of assembly, interacts with HTR-I.

Its subcellular location is the cell membrane. Involved in the control of phototaxis. Mediates both photoattractant (in the orange light) and photophobic (in the near UV light) responses. The signal is then transmitted to the sensory rhodopsin I transducer (HTR-I). The chain is Sensory rhodopsin-1 (sopI) from Halobacterium salinarum (strain ATCC 29341 / DSM 671 / R1).